Reading from the N-terminus, the 946-residue chain is Protein translocase subunit SecA (946 aa).

Residues Q87, 105-109 (GEGKT), and D524 each bind ATP. 2 disordered regions span residues 872–892 (PEQP…NTGE) and 904–946 (PADT…GRYA). Over residues 907 to 917 (TVEKSERDPNR) the composition is skewed to basic and acidic residues. Residues C930, C932, C941, and H942 each coordinate Zn(2+). Residues 936–946 (KKYKHCHGRYA) show a composition bias toward basic residues.

This sequence belongs to the SecA family. As to quaternary structure, monomer and homodimer. Part of the essential Sec protein translocation apparatus which comprises SecA, SecYEG and auxiliary proteins SecDF-YajC and YidC. The cofactor is Zn(2+).

The protein resides in the cell inner membrane. It localises to the cytoplasm. The enzyme catalyses ATP + H2O + cellular proteinSide 1 = ADP + phosphate + cellular proteinSide 2.. Part of the Sec protein translocase complex. Interacts with the SecYEG preprotein conducting channel. Has a central role in coupling the hydrolysis of ATP to the transfer of proteins into and across the cell membrane, serving both as a receptor for the preprotein-SecB complex and as an ATP-driven molecular motor driving the stepwise translocation of polypeptide chains across the membrane. This chain is Protein translocase subunit SecA, found in Rhodopseudomonas palustris (strain BisB5).